A 243-amino-acid chain; its full sequence is NAD(P)H-quinone oxidoreductase subunit K (243 aa).

The [4Fe-4S] cluster site is built by Cys59, Cys60, Cys124, and Cys155.

Belongs to the complex I 20 kDa subunit family. As to quaternary structure, NDH-1 can be composed of about 15 different subunits; different subcomplexes with different compositions have been identified which probably have different functions. The cofactor is [4Fe-4S] cluster.

The protein localises to the cellular thylakoid membrane. It catalyses the reaction a plastoquinone + NADH + (n+1) H(+)(in) = a plastoquinol + NAD(+) + n H(+)(out). The catalysed reaction is a plastoquinone + NADPH + (n+1) H(+)(in) = a plastoquinol + NADP(+) + n H(+)(out). Functionally, NDH-1 shuttles electrons from an unknown electron donor, via FMN and iron-sulfur (Fe-S) centers, to quinones in the respiratory and/or the photosynthetic chain. The immediate electron acceptor for the enzyme in this species is believed to be plastoquinone. Couples the redox reaction to proton translocation, and thus conserves the redox energy in a proton gradient. Cyanobacterial NDH-1 also plays a role in inorganic carbon-concentration. The protein is NAD(P)H-quinone oxidoreductase subunit K of Picosynechococcus sp. (strain ATCC 27264 / PCC 7002 / PR-6) (Agmenellum quadruplicatum).